A 156-amino-acid polypeptide reads, in one-letter code: ATP synthase subunit b', chloroplastic (156 aa).

The helical transmembrane segment at 24–44 threads the bilayer; sequence ATLPLVAIQFILLMVLLNILL.

It belongs to the ATPase B chain family. F-type ATPases have 2 components, F(1) - the catalytic core - and F(0) - the membrane proton channel. F(1) has five subunits: alpha(3), beta(3), gamma(1), delta(1), epsilon(1). F(0) has four main subunits: a(1), b(1), b'(1) and c(10-14). The alpha and beta chains form an alternating ring which encloses part of the gamma chain. F(1) is attached to F(0) by a central stalk formed by the gamma and epsilon chains, while a peripheral stalk is formed by the delta, b and b' chains.

Its subcellular location is the plastid. It localises to the chloroplast thylakoid membrane. Its function is as follows. F(1)F(0) ATP synthase produces ATP from ADP in the presence of a proton or sodium gradient. F-type ATPases consist of two structural domains, F(1) containing the extramembraneous catalytic core and F(0) containing the membrane proton channel, linked together by a central stalk and a peripheral stalk. During catalysis, ATP synthesis in the catalytic domain of F(1) is coupled via a rotary mechanism of the central stalk subunits to proton translocation. Component of the F(0) channel, it forms part of the peripheral stalk, linking F(1) to F(0). The b'-subunit is a diverged and duplicated form of b found in plants and photosynthetic bacteria. The protein is ATP synthase subunit b', chloroplastic of Phaeodactylum tricornutum (strain CCAP 1055/1).